The following is a 257-amino-acid chain: 7-carboxy-7-deazaguanine synthase (257 aa).

The tract at residues 1–25 (MKSVDHPVDVLPAEHSAETPGDARA) is disordered. Substrate is bound by residues 39-41 (RQG) and arginine 54. Residues 45–244 (LTGTESVFIR…AISRGYQYCD (200 aa)) form the Radical SAM core domain. 3 residues coordinate [4Fe-4S] cluster: cysteine 58, cysteine 62, and cysteine 65. Threonine 67 contacts Mg(2+). Residue threonine 99 participates in substrate binding. S-adenosyl-L-methionine-binding positions include glycine 101 and 143–145 (SPK).

Belongs to the radical SAM superfamily. 7-carboxy-7-deazaguanine synthase family. In terms of assembly, homodimer. The cofactor is [4Fe-4S] cluster. Requires S-adenosyl-L-methionine as cofactor. It depends on Mg(2+) as a cofactor.

The catalysed reaction is 6-carboxy-5,6,7,8-tetrahydropterin + H(+) = 7-carboxy-7-deazaguanine + NH4(+). It functions in the pathway purine metabolism; 7-cyano-7-deazaguanine biosynthesis. Catalyzes the complex heterocyclic radical-mediated conversion of 6-carboxy-5,6,7,8-tetrahydropterin (CPH4) to 7-carboxy-7-deazaguanine (CDG), a step common to the biosynthetic pathways of all 7-deazapurine-containing compounds. This Rhodopirellula baltica (strain DSM 10527 / NCIMB 13988 / SH1) protein is 7-carboxy-7-deazaguanine synthase.